The chain runs to 31 residues: Cytochrome b6-f complex subunit 6 (31 aa).

The chain crosses the membrane as a helical span at residues 4–24 (ITSYFGFLLAALTLTLALFIG).

Belongs to the PetL family. In terms of assembly, the 4 large subunits of the cytochrome b6-f complex are cytochrome b6, subunit IV (17 kDa polypeptide, PetD), cytochrome f and the Rieske protein, while the 4 small subunits are PetG, PetL, PetM and PetN. The complex functions as a dimer.

Its subcellular location is the plastid. It is found in the chloroplast thylakoid membrane. Functionally, component of the cytochrome b6-f complex, which mediates electron transfer between photosystem II (PSII) and photosystem I (PSI), cyclic electron flow around PSI, and state transitions. PetL is important for photoautotrophic growth as well as for electron transfer efficiency and stability of the cytochrome b6-f complex. The protein is Cytochrome b6-f complex subunit 6 of Oryza sativa subsp. japonica (Rice).